We begin with the raw amino-acid sequence, 66 residues long: Large ribosomal subunit protein uL29 (66 aa).

This sequence belongs to the universal ribosomal protein uL29 family.

This Geobacillus kaustophilus (strain HTA426) protein is Large ribosomal subunit protein uL29.